We begin with the raw amino-acid sequence, 215 residues long: Thiamine-phosphate synthase (215 aa).

Residues 40 to 44 (QLRIK) and N72 each bind 4-amino-2-methyl-5-(diphosphooxymethyl)pyrimidine. Mg(2+) is bound by residues D73 and D92. S111 serves as a coordination point for 4-amino-2-methyl-5-(diphosphooxymethyl)pyrimidine. 137–139 (TTT) contributes to the 2-[(2R,5Z)-2-carboxy-4-methylthiazol-5(2H)-ylidene]ethyl phosphate binding site. K140 is a binding site for 4-amino-2-methyl-5-(diphosphooxymethyl)pyrimidine. Residues G169 and 189–190 (VS) contribute to the 2-[(2R,5Z)-2-carboxy-4-methylthiazol-5(2H)-ylidene]ethyl phosphate site.

It belongs to the thiamine-phosphate synthase family. Mg(2+) is required as a cofactor.

The catalysed reaction is 2-[(2R,5Z)-2-carboxy-4-methylthiazol-5(2H)-ylidene]ethyl phosphate + 4-amino-2-methyl-5-(diphosphooxymethyl)pyrimidine + 2 H(+) = thiamine phosphate + CO2 + diphosphate. The enzyme catalyses 2-(2-carboxy-4-methylthiazol-5-yl)ethyl phosphate + 4-amino-2-methyl-5-(diphosphooxymethyl)pyrimidine + 2 H(+) = thiamine phosphate + CO2 + diphosphate. It catalyses the reaction 4-methyl-5-(2-phosphooxyethyl)-thiazole + 4-amino-2-methyl-5-(diphosphooxymethyl)pyrimidine + H(+) = thiamine phosphate + diphosphate. Its pathway is cofactor biosynthesis; thiamine diphosphate biosynthesis; thiamine phosphate from 4-amino-2-methyl-5-diphosphomethylpyrimidine and 4-methyl-5-(2-phosphoethyl)-thiazole: step 1/1. Functionally, condenses 4-methyl-5-(beta-hydroxyethyl)thiazole monophosphate (THZ-P) and 2-methyl-4-amino-5-hydroxymethyl pyrimidine pyrophosphate (HMP-PP) to form thiamine monophosphate (TMP). This is Thiamine-phosphate synthase from Proteus mirabilis (strain HI4320).